Here is a 373-residue protein sequence, read N- to C-terminus: Mannitol-1-phosphate 5-dehydrogenase (373 aa).

NAD(+) is bound at residue 3 to 14 (ALHFGAGNIGRG).

Belongs to the mannitol dehydrogenase family.

The catalysed reaction is D-mannitol 1-phosphate + NAD(+) = beta-D-fructose 6-phosphate + NADH + H(+). In Bacillus subtilis (strain 168), this protein is Mannitol-1-phosphate 5-dehydrogenase (mtlD).